The primary structure comprises 226 residues: Cytidylate kinase (226 aa).

Glycine 12–threonine 20 is an ATP binding site.

Belongs to the cytidylate kinase family. Type 1 subfamily.

It is found in the cytoplasm. It catalyses the reaction CMP + ATP = CDP + ADP. It carries out the reaction dCMP + ATP = dCDP + ADP. This Xanthomonas campestris pv. campestris (strain 8004) protein is Cytidylate kinase.